Reading from the N-terminus, the 470-residue chain is Neuronal acetylcholine receptor subunit beta-4 (470 aa).

An N-terminal signal peptide occupies residues 1–3; that stretch reads STA. Over 4 to 216 the chain is Extracellular; sequence ADAEEKLMNH…IIKRKPLFYT (213 aa). N-linked (GlcNAc...) asparagine glycosylation is found at Asn29, Asn118, and Asn146. Cys133 and Cys147 are joined by a disulfide. A helical membrane pass occupies residues 217–237; sequence INLIIPCVLITSLAILVFYLP. Over 238 to 245 the chain is Cytoplasmic; sequence SDCGEKMT. Position 242 (Glu242) interacts with Na(+). Residues 246 to 266 form a helical membrane-spanning segment; the sequence is LCISVLLALTVFLLLISKIVP. Topologically, residues 267 to 278 are extracellular; the sequence is PTSLDVPLIGKY. The chain crosses the membrane as a helical span at residues 279–299; it reads LMFTMVLVTFSIVTSVCVLNV. The Cytoplasmic portion of the chain corresponds to 300 to 438; sequence HHRSPSTHTM…WKYVAMVVDR (139 aa). Residues 439-459 form a helical membrane-spanning segment; sequence LFLWIFVLVCVLGTVGLFLQP. Over 460–470 the chain is Extracellular; sequence LFQNHIAATNP.

Belongs to the ligand-gated ion channel (TC 1.A.9) family. Acetylcholine receptor (TC 1.A.9.1) subfamily. Beta-4/CHRNB4 sub-subfamily. Neuronal AChR is composed of two different types of subunits: alpha and beta. CHRNB4/Beta-4 subunit can be combined to CHRNA2/alpha-2, CHRNA3/alpha-3 or CHRNA4/alpha-4, CHRNA5/alpha-5 and CHRNB3/beta-3 to give rise to functional receptors.

It is found in the synaptic cell membrane. Its subcellular location is the cell membrane. It catalyses the reaction Ca(2+)(in) = Ca(2+)(out). The enzyme catalyses K(+)(in) = K(+)(out). It carries out the reaction Na(+)(in) = Na(+)(out). With respect to regulation, activated by a myriad of ligands such as acetylcholine, cytisine, nicotine, choline and epibatidine. The heteropentamer CHRNA3:CHRNB4 activity is blocked by the alpha-conotoxin ImI and AuIB. In terms of biological role, component of neuronal acetylcholine receptors (nAChRs) that function as pentameric, ligand-gated cation channels with high calcium permeability among other activities. nAChRs are excitatory neurotrasnmitter receptors formed by a collection of nAChR subunits known to mediate synaptic transmission in the nervous system and the neuromuscular junction. Each nAchR subunit confers differential attributes to channel properties, including activation, deactivation and desensitization kinetics, pH sensitivity, cation permeability, and binding to allosteric modulators. CHRNB4 forms heteropentameric neuronal acetylcholine receptors with CHRNA2, CHRNA3 and CHRNA4, as well as CHRNA5 and CHRNB3 as accesory subunits. CHRNA3:CHRNB4 being predominant in neurons of the autonomic ganglia, it is known as ganglionic nicotinic receptor. CHRNA3:CHRNB4 or CHRNA3:CHRNA5:CHRNB4 play also an important role in the habenulo-interpeduncular tract, modulating the mesolimbic dopamine system and affecting reward circuits and addiction. Hypothalamic CHRNA3:CHRNB4 nAChR activation by nicotine leads to activation of POMC neurons and a decrease in food intake. This chain is Neuronal acetylcholine receptor subunit beta-4 (CHRNB4), found in Gallus gallus (Chicken).